The chain runs to 378 residues: Queuine tRNA-ribosyltransferase (378 aa).

Catalysis depends on D89, which acts as the Proton acceptor. Residues 89–93, D143, Q194, and G221 contribute to the substrate site; that span reads DSGGF. Residues 252–258 form an RNA binding region; sequence GVGTPAN. D271 (nucleophile) is an active-site residue. Zn(2+) contacts are provided by C309, C311, C314, and H340.

This sequence belongs to the queuine tRNA-ribosyltransferase family. Homodimer. Within each dimer, one monomer is responsible for RNA recognition and catalysis, while the other monomer binds to the replacement base PreQ1. The cofactor is Zn(2+).

The catalysed reaction is 7-aminomethyl-7-carbaguanine + guanosine(34) in tRNA = 7-aminomethyl-7-carbaguanosine(34) in tRNA + guanine. The protein operates within tRNA modification; tRNA-queuosine biosynthesis. Catalyzes the base-exchange of a guanine (G) residue with the queuine precursor 7-aminomethyl-7-deazaguanine (PreQ1) at position 34 (anticodon wobble position) in tRNAs with GU(N) anticodons (tRNA-Asp, -Asn, -His and -Tyr). Catalysis occurs through a double-displacement mechanism. The nucleophile active site attacks the C1' of nucleotide 34 to detach the guanine base from the RNA, forming a covalent enzyme-RNA intermediate. The proton acceptor active site deprotonates the incoming PreQ1, allowing a nucleophilic attack on the C1' of the ribose to form the product. After dissociation, two additional enzymatic reactions on the tRNA convert PreQ1 to queuine (Q), resulting in the hypermodified nucleoside queuosine (7-(((4,5-cis-dihydroxy-2-cyclopenten-1-yl)amino)methyl)-7-deazaguanosine). This Lachnospira eligens (strain ATCC 27750 / DSM 3376 / VPI C15-48 / C15-B4) (Eubacterium eligens) protein is Queuine tRNA-ribosyltransferase.